Reading from the N-terminus, the 162-residue chain is Peptidyl-prolyl cis-trans isomerase (162 aa).

Serine 2 carries the N-acetylserine modification. The PPIase cyclophilin-type domain maps to 5-161 (YFDVEADGQP…ARIVVAKSGE (157 aa)). Residues lysine 29 and lysine 42 each participate in a glycyl lysine isopeptide (Lys-Gly) (interchain with G-Cter in ubiquitin) cross-link. The residue at position 71 (threonine 71) is a Phosphothreonine. Residues lysine 123 and lysine 139 each participate in a glycyl lysine isopeptide (Lys-Gly) (interchain with G-Cter in ubiquitin) cross-link. Phosphoserine occurs at positions 142 and 145. Glycyl lysine isopeptide (Lys-Gly) (interchain with G-Cter in ubiquitin) cross-links involve residues lysine 151 and lysine 158.

This sequence belongs to the cyclophilin-type PPIase family. PPIase A subfamily. In terms of assembly, interacts with a complex composed of SIN3 and RPD3. Identified in the Set3C complex with HOS2, HST1, SNT1, SIF2, HOS4/YIL112W and SET3.

The protein localises to the cytoplasm. It is found in the nucleus. Its subcellular location is the mitochondrion intermembrane space. It catalyses the reaction [protein]-peptidylproline (omega=180) = [protein]-peptidylproline (omega=0). Binds cyclosporin A (CsA). CsA mediates some of its effects via an inhibitory action on PPIase. Its function is as follows. PPIases accelerate the folding of proteins. It catalyzes the cis-trans isomerization of proline imidic peptide bonds in oligopeptides. Involved in histone deacetylase complexes, suggesting a function in chromatin. Imports fructose-1,6-bisphosphatase (FBPase) into the intermediate vacuole import and degradation (Vid) vesicles. Regulates the meiotic gene program via the Set3C histone deacetylase complex to promote efficient sporulation, and the prolyl-isomerase activity is required for this function. This is Peptidyl-prolyl cis-trans isomerase (CPR1) from Saccharomyces cerevisiae (strain ATCC 204508 / S288c) (Baker's yeast).